A 444-amino-acid polypeptide reads, in one-letter code: UDP-N-acetylmuramate--L-alanine ligase (444 aa).

110–116 (GAHGKTS) provides a ligand contact to ATP.

It belongs to the MurCDEF family.

Its subcellular location is the cytoplasm. It carries out the reaction UDP-N-acetyl-alpha-D-muramate + L-alanine + ATP = UDP-N-acetyl-alpha-D-muramoyl-L-alanine + ADP + phosphate + H(+). It functions in the pathway cell wall biogenesis; peptidoglycan biosynthesis. Cell wall formation. The chain is UDP-N-acetylmuramate--L-alanine ligase from Streptococcus pneumoniae (strain Hungary19A-6).